The primary structure comprises 309 residues: Tumor necrosis factor ligand superfamily member 13B (309 aa).

At 1-47 (MDESAKTLPPPCLCFCSEKGEDMKVGYDPITPQKEEGAWFGICRDGR) the chain is on the cytoplasmic side. Residues 48–68 (LLAATLLLALLSSSFTAMSLY) traverse the membrane as a helical; Signal-anchor for type II membrane protein segment. Over 69–309 (QLAALQADLM…DTFFGALKLL (241 aa)) the chain is Extracellular. A disordered region spans residues 110–140 (PAAPRPHNSSRGHRNRRAFQGPEETEQDVDL). N-linked (GlcNAc...) asparagine glycosylation is found at asparagine 117 and asparagine 266. The span at 117-126 (NSSRGHRNRR) shows a compositional bias: basic residues. Positions 169 to 308 (DCLQLIADSD…DDTFFGALKL (140 aa)) constitute a THD domain. A disulfide bridge connects residues cysteine 256 and cysteine 269.

Belongs to the tumor necrosis factor family. In terms of assembly, homotrimer. Isoform 2 heteromultimerizes with isoform 1, probably limiting the amount of functional isoform 1 on the cell surface. Post-translationally, the soluble form derives from the membrane form by proteolytic processing. In terms of processing, isoform 2 is not efficiently shed from the membrane unlike isoform 1. In terms of tissue distribution, isoform 2 is expressed in many myeloid cell lines.

It is found in the cell membrane. It localises to the secreted. Its function is as follows. Cytokine that binds to TNFRSF13B/TACI and TNFRSF17/BCMA. TNFSF13/APRIL binds to the same 2 receptors. Together, they form a 2 ligands -2 receptors pathway involved in the stimulation of B- and T-cell function and the regulation of humoral immunity. A third B-cell specific BAFF-receptor (BAFFR/BR3) promotes the survival of mature B-cells and the B-cell response. Isoform 2 seems to inhibit isoform 1 secretion and bioactivity. This Mus musculus (Mouse) protein is Tumor necrosis factor ligand superfamily member 13B (Tnfsf13b).